The chain runs to 92 residues: Small ribosomal subunit protein uS19 (92 aa).

It belongs to the universal ribosomal protein uS19 family.

Protein S19 forms a complex with S13 that binds strongly to the 16S ribosomal RNA. The sequence is that of Small ribosomal subunit protein uS19 from Rickettsia bellii (strain OSU 85-389).